Here is a 400-residue protein sequence, read N- to C-terminus: DNA polymerase IV (400 aa).

In terms of domain architecture, UmuC spans 5-187 (IFLVDMNAFF…LPVEFMNGIG (183 aa)). D9 and D105 together coordinate Mg(2+). The active site involves E106.

This sequence belongs to the DNA polymerase type-Y family. In terms of assembly, monomer. Mg(2+) is required as a cofactor.

The protein localises to the cytoplasm. It carries out the reaction DNA(n) + a 2'-deoxyribonucleoside 5'-triphosphate = DNA(n+1) + diphosphate. In terms of biological role, poorly processive, error-prone DNA polymerase involved in untargeted mutagenesis. Copies undamaged DNA at stalled replication forks, which arise in vivo from mismatched or misaligned primer ends. These misaligned primers can be extended by PolIV. Exhibits no 3'-5' exonuclease (proofreading) activity. May be involved in translesional synthesis, in conjunction with the beta clamp from PolIII. In Clostridium kluyveri (strain ATCC 8527 / DSM 555 / NBRC 12016 / NCIMB 10680 / K1), this protein is DNA polymerase IV.